We begin with the raw amino-acid sequence, 1117 residues long: Endogenous retrovirus group K member 9 Pol protein (1117 aa).

Gly2 is lipidated: N-myristoyl glycine. The 138-residue stretch at 58 to 195 (KDWKRIGKEL…AGQVPVTLQP (138 aa)) folds into the Reverse transcriptase domain. Residues 165-264 (GKGPELVGPS…APPSRQGSEL (100 aa)) form a disordered region. Residues 232–247 (GMPPAPQGRAPYPQPP) show a composition bias toward pro residues. 2 CCHC-type zinc fingers span residues 544 to 561 (GKCYNCGQIGHLKKNCPV) and 580 to 597 (DLCPRCKKGKHWASQCRS). The interval 598 to 629 (KFDKNGQPLSGNEQRGQPQAPQQTGAFPIQPF) is disordered. Positions 604-622 (QPLSGNEQRGQPQAPQQTG) are enriched in polar residues. A Peptidase A2 domain is found at 800–875 (FEGLVDTGAD…IPLNLWGRDL (76 aa)). The active site involves Asp805. A G-patch domain is found at 890-936 (YSPTSQKIMTKRGYIPGKGLGKNEDGIKIPFEAKINQKREGIGYPFL).

This sequence belongs to the beta type-B retroviral polymerase family. HERV class-II K(HML-2) pol subfamily. In terms of processing, myristoylation is essential for retroviral assembly. Alteration of the glycine residue leads to a block in the budding of particles and an accumulation of Gag inside the cell. Specific enzymatic cleavages may yield mature proteins.

It is found in the cell membrane. It carries out the reaction Processing at the authentic HIV-1 PR recognition site and release of the mature p17 matrix and the p24 capsid protein, as a result of the cleavage of the -SQNY-|-PIVQ- cleavage site.. It catalyses the reaction DNA(n) + a 2'-deoxyribonucleoside 5'-triphosphate = DNA(n+1) + diphosphate. The catalysed reaction is Endonucleolytic cleavage to 5'-phosphomonoester.. Functionally, the products of the Gag polyproteins of infectious retroviruses perform highly complex orchestrated tasks during the assembly, budding, maturation, and infection stages of the viral replication cycle. During viral assembly, the proteins form membrane associations and self-associations that ultimately result in budding of an immature virion from the infected cell. Gag precursors also function during viral assembly to selectively bind and package two plus strands of genomic RNA. Endogenous Gag proteins may have kept, lost or modified their original function during evolution. Its function is as follows. Early post-infection, the reverse transcriptase converts the viral RNA genome into double-stranded viral DNA. The RNase H domain of the reverse transcriptase performs two functions. It degrades the RNA template and specifically removes the RNA primer from the RNA/DNA hybrid. Following nuclear import, the integrase catalyzes the insertion of the linear, double-stranded viral DNA into the host cell chromosome. Endogenous Pol proteins may have kept, lost or modified their original function during evolution. In Homo sapiens (Human), this protein is Endogenous retrovirus group K member 9 Pol protein (ERVK-9).